Reading from the N-terminus, the 202-residue chain is Small ribosomal subunit protein uS4 (202 aa).

A compositionally biased stretch (basic residues) spans 1–13 (MSRYRGPRLRVTR). The segment at 1-42 (MSRYRGPRLRVTRRLGELPGLTRKASKKSNPPGQHGQARRKR) is disordered. Residues 90-152 (NRLDNVCFRL…KASKKLVEGN (63 aa)) form the S4 RNA-binding domain.

Belongs to the universal ribosomal protein uS4 family. As to quaternary structure, part of the 30S ribosomal subunit. Contacts protein S5. The interaction surface between S4 and S5 is involved in control of translational fidelity.

In terms of biological role, one of the primary rRNA binding proteins, it binds directly to 16S rRNA where it nucleates assembly of the body of the 30S subunit. Its function is as follows. With S5 and S12 plays an important role in translational accuracy. The sequence is that of Small ribosomal subunit protein uS4 from Prochlorococcus marinus subsp. pastoris (strain CCMP1986 / NIES-2087 / MED4).